A 573-amino-acid chain; its full sequence is PCNA-interacting partner (573 aa).

2 disordered regions span residues 470 to 505 (VGKARIEASSENAHVGRWKGDKLPRKSTQRQISKGK) and 531 to 560 (PKVPSGSHSKAGGKLAQGTKGNRCPARGKL).

It belongs to the PARI family. In terms of assembly, interacts with RAD51 and PCNA. Interacts with PARP1. Interacts with TASOR. As to expression, expressed in the ovary, Sertoli cells of the testis and in granular cells within the cerebellum.

The protein localises to the cytoplasm. The protein resides in the nucleus. In terms of biological role, required to suppress inappropriate homologous recombination, thereby playing a central role DNA repair and in the maintenance of genomic stability. Antagonizes homologous recombination by interfering with the formation of the RAD51-DNA homologous recombination structure. Binds single-strand DNA and poly(A) homopolymers. Positively regulate the poly(ADP-ribosyl)ation activity of PARP1; however such function may be indirect. In Mus musculus (Mouse), this protein is PCNA-interacting partner (Parpbp).